Here is a 231-residue protein sequence, read N- to C-terminus: High-affinity zinc uptake system ATP-binding protein ZnuC (231 aa).

The ABC transporter domain occupies 4–230 (VSLKDIVFGY…CLTWNSCDEL (227 aa)).

This sequence belongs to the ABC transporter superfamily. In terms of assembly, the complex is composed of two ATP-binding proteins (ZnuC), two transmembrane proteins (ZnuB) and a solute-binding protein (ZnuA).

The protein resides in the cell membrane. It catalyses the reaction Zn(2+)(out) + ATP(in) + H2O(in) = Zn(2+)(in) + ADP(in) + phosphate(in) + H(+)(in). Functionally, part of the high-affinity ABC transporter complex ZnuABC involved in zinc import. Responsible for energy coupling to the transport system. ZnuABC-mediated zinc transport is required for comF expression and competence development. The sequence is that of High-affinity zinc uptake system ATP-binding protein ZnuC (znuC) from Bacillus subtilis (strain 168).